A 599-amino-acid chain; its full sequence is Transcription factor COE4 (599 aa).

Residues 64–67 (RKSN) are interaction with DNA. The C5-type zinc finger occupies 152–171 (CRVLLTHEIMCSRCCDRKSC). 2 interaction with DNA regions span residues 198-205 (NCLKNAGN) and 237-240 (NNSK). The region spanning 256–339 (PCIKAISPGE…KGAPGRFVYT (84 aa)) is the IPT/TIG domain. Disordered regions lie at residues 449–473 (GYAR…SSYG) and 556–586 (VLRP…TDKF). Residues 464 to 473 (SPGSQQSSYG) show a composition bias toward low complexity.

It belongs to the COE family. Forms either a homodimer or a heterodimer with a related family member. In terms of tissue distribution, expressed in the olfactory epithelium, including in both neuronal and basal cell layers. Absent in the vomeronasal organ. Absent from NK cells and CD8(+) T cells.

The protein resides in the nucleus. In terms of biological role, transcription factor. Positively modulates transcription, perhaps less strongly than other early B cell factor/EBF family proteins. Binds an EBF1/Olf-1 consensus site in vitro. The sequence is that of Transcription factor COE4 (Ebf4) from Mus musculus (Mouse).